A 216-amino-acid chain; its full sequence is MTSKEELLQELSEAIISCKKDAVLAAVEKAKQVMEPAEIIENGLAAGMNQVGVLFERGKLFLPHVMMAADAMTAGVKVLEADMPAGTETKKLGVIVNGTVEGDVHDIGKSIVSTMLQSAGFEVHDIGRDVPIKNFVEKAKEVNANMIGISALMTTTLQGQREVIELLKEEGMREKVKVMVGGAPATQAWADKIGADCYAENASEAVAKAKELLVGK.

Positions 1-91 constitute a B12-binding N-terminal domain; the sequence is MTSKEELLQE…DMPAGTETKK (91 aa). Residues 92-216 form the B12-binding domain; sequence LGVIVNGTVE…AKAKELLVGK (125 aa). His105 contributes to the methylcob(III)alamin binding site.

The protein belongs to the methylamine corrinoid protein family.

It functions in the pathway one-carbon metabolism; methanogenesis from dimethylamine. Functionally, acts as a methyl group carrier between MtbB and MtbA. The chain is Dimethylamine corrinoid protein 1 (mtbC1) from Methanosarcina mazei (strain ATCC BAA-159 / DSM 3647 / Goe1 / Go1 / JCM 11833 / OCM 88) (Methanosarcina frisia).